The following is a 221-amino-acid chain: Ribonuclease HII (221 aa).

One can recognise an RNase H type-2 domain in the interval 29–220 (RRVAGVDEVG…LRDLQAGEIG (192 aa)). Positions 35, 36, and 129 each coordinate a divalent metal cation. The interval 198-221 (LGPSPQHRRSFAPLRDLQAGEIGG) is disordered.

Belongs to the RNase HII family. Mn(2+) serves as cofactor. It depends on Mg(2+) as a cofactor.

It localises to the cytoplasm. It catalyses the reaction Endonucleolytic cleavage to 5'-phosphomonoester.. Endonuclease that specifically degrades the RNA of RNA-DNA hybrids. This is Ribonuclease HII from Synechococcus sp. (strain JA-3-3Ab) (Cyanobacteria bacterium Yellowstone A-Prime).